A 343-amino-acid chain; its full sequence is Anthranilate phosphoribosyltransferase (343 aa).

Residues G86, 89–90, T94, 96–99, 114–122, and S126 contribute to the 5-phospho-alpha-D-ribose 1-diphosphate site; these read GD, NIST, and KHGNKSASG. G86 serves as a coordination point for anthranilate. S98 serves as a coordination point for Mg(2+). N117 contributes to the anthranilate binding site. R172 serves as a coordination point for anthranilate. Positions 231 and 232 each coordinate Mg(2+).

This sequence belongs to the anthranilate phosphoribosyltransferase family. As to quaternary structure, homodimer. Mg(2+) is required as a cofactor.

It carries out the reaction N-(5-phospho-beta-D-ribosyl)anthranilate + diphosphate = 5-phospho-alpha-D-ribose 1-diphosphate + anthranilate. The protein operates within amino-acid biosynthesis; L-tryptophan biosynthesis; L-tryptophan from chorismate: step 2/5. Catalyzes the transfer of the phosphoribosyl group of 5-phosphorylribose-1-pyrophosphate (PRPP) to anthranilate to yield N-(5'-phosphoribosyl)-anthranilate (PRA). The sequence is that of Anthranilate phosphoribosyltransferase from Prochlorococcus marinus subsp. pastoris (strain CCMP1986 / NIES-2087 / MED4).